Here is a 139-residue protein sequence, read N- to C-terminus: Lymphocyte antigen 6H (139 aa).

The signal sequence occupies residues 1–25 (MLPAAMKSLGLALLALLLCPSPAHG). Residues 26 to 113 (LWCQDCTLAN…CEKDLCNGAS (88 aa)) enclose the UPAR/Ly6 domain. Cystine bridges form between Cys-28–Cys-51, Cys-31–Cys-39, Cys-44–Cys-72, Cys-76–Cys-103, and Cys-104–Cys-109. The N-linked (GlcNAc...) asparagine glycan is linked to Asn-35. Asn-110 carries the GPI-anchor amidated asparagine lipid modification. A propeptide spans 111 to 139 (GASVAGRSPWALAGGLLLSLGPALLWAGP) (removed in mature form).

Interacts with CHRNA4 and CHRNA7. Strongly expressed in brain, also found in lower levels in eye and reproductive tissues.

The protein resides in the cell membrane. Functionally, believed to act as modulator of nicotinic acetylcholine receptors (nAChRs) activity. In vitro inhibits alpha-3:beta-4-containing nAChRs maximum response. In vitro inhibits alpha-3:beta-4-containing nAChRs maximum response. May play a role in the intracellular trafficking of alpha-7-containing nAChRs and may inhibit their expression at the cell surface. Seems to inhibit alpha-7/CHRNA7 signaling in hippocampal neurons. The chain is Lymphocyte antigen 6H (Ly6h) from Mus musculus (Mouse).